The primary structure comprises 220 residues: MIKWLARPADYASVWDAMKTFTAARGPGTADEIWLCEHAPVYTLGQVGRPEHLLNPGLIPVVHCDRGGQVTYHGPGQVLAYTLFDLRRAGLYVREYVDMLEQATLATLRELGLEQACRKPGAPGIYVPQPGGELAKIAALGVKVRNGYAYHGLALNIDMDLSPFLGINPCGYEGLRTVDLAACGVRTSVERAGELLAAQLARAHGQAVQQRAAALAGVPG.

The BPL/LPL catalytic domain maps to 27–208 (PGTADEIWLC…QLARAHGQAV (182 aa)). Substrate is bound by residues 66 to 73 (RGGQVTYH), 139 to 141 (ALG), and 152 to 154 (GLA). The active-site Acyl-thioester intermediate is the Cys170.

It belongs to the LipB family.

The protein resides in the cytoplasm. The enzyme catalyses octanoyl-[ACP] + L-lysyl-[protein] = N(6)-octanoyl-L-lysyl-[protein] + holo-[ACP] + H(+). The protein operates within protein modification; protein lipoylation via endogenous pathway; protein N(6)-(lipoyl)lysine from octanoyl-[acyl-carrier-protein]: step 1/2. Catalyzes the transfer of endogenously produced octanoic acid from octanoyl-acyl-carrier-protein onto the lipoyl domains of lipoate-dependent enzymes. Lipoyl-ACP can also act as a substrate although octanoyl-ACP is likely to be the physiological substrate. The sequence is that of Octanoyltransferase from Bordetella pertussis (strain Tohama I / ATCC BAA-589 / NCTC 13251).